Reading from the N-terminus, the 1444-residue chain is DNA polymerase III PolC-type (1444 aa).

In terms of domain architecture, Exonuclease spans 421-577 (YVVFDVETTG…ADAEATGYLL (157 aa)).

Belongs to the DNA polymerase type-C family. PolC subfamily.

Its subcellular location is the cytoplasm. The catalysed reaction is DNA(n) + a 2'-deoxyribonucleoside 5'-triphosphate = DNA(n+1) + diphosphate. In terms of biological role, required for replicative DNA synthesis. This DNA polymerase also exhibits 3' to 5' exonuclease activity. This is DNA polymerase III PolC-type from Lacticaseibacillus paracasei (strain ATCC 334 / BCRC 17002 / CCUG 31169 / CIP 107868 / KCTC 3260 / NRRL B-441) (Lactobacillus paracasei).